A 136-amino-acid polypeptide reads, in one-letter code: Holo-[acyl-carrier-protein] synthase (136 aa).

2 residues coordinate Mg(2+): D7 and E53.

It belongs to the P-Pant transferase superfamily. AcpS family. It depends on Mg(2+) as a cofactor.

It localises to the cytoplasm. It catalyses the reaction apo-[ACP] + CoA = holo-[ACP] + adenosine 3',5'-bisphosphate + H(+). In terms of biological role, transfers the 4'-phosphopantetheine moiety from coenzyme A to a Ser of acyl-carrier-protein. The chain is Holo-[acyl-carrier-protein] synthase from Roseiflexus castenholzii (strain DSM 13941 / HLO8).